We begin with the raw amino-acid sequence, 466 residues long: Voltage-gated potassium channel regulatory subunit KCNG2 (466 aa).

The Cytoplasmic segment spans residues 1-174 (MEPWPCSPGG…DVVDNPHSGL (174 aa)). The tract at residues 131–155 (AEARAGPTERGAQGSPARALGPRGR) is disordered. Residues 175-196 (AGKLFACVSVSFVAVTAVGLCL) traverse the membrane as a helical segment. Over 197–217 (STMPDIRAEEERGECSPKCRS) the chain is Extracellular. A helical membrane pass occupies residues 218–239 (LFVLETVCVAWFSFEFLLRSLQ). Residues 240 to 250 (AESKCAFLRAP) are Cytoplasmic-facing. A helical transmembrane segment spans residues 251–271 (LNIIDILALLPFYVSLLLGLA). Residues 272–283 (AGPGGTKLLERA) lie on the Extracellular side of the membrane. The helical; Voltage-sensor transmembrane segment at 284–304 (GLVLRLLRALRVLYVMRLARH) threads the bilayer. Topologically, residues 305–319 (SLGLRSLGLTMRRCA) are cytoplasmic. The helical transmembrane segment at 320 to 341 (REFGLLLLFLCVAMALFAPLVH) threads the bilayer. Residues 342-356 (LAERELGARRDFSSV) lie on the Extracellular side of the membrane. Positions 357–368 (PASYWWAVISMT) form an intramembrane region, helical. The Selectivity filter signature appears at 369–374 (TVGYGD). An intramembrane segment occupies 369-376 (TVGYGDMV). Residues 377-383 (PRSLPGQ) lie on the Extracellular side of the membrane. A helical transmembrane segment spans residues 384–412 (VVALSSILSGILLMAFPVTSIFHTFSRSY). Residues 413 to 466 (SELKEQQQRAASPEPALQEDSTHSATATEDSSQGPDSAGLADDSADALWVRAGR) are Cytoplasmic-facing. Residues 416–466 (KEQQQRAASPEPALQEDSTHSATATEDSSQGPDSAGLADDSADALWVRAGR) form a disordered region. The span at 435–447 (HSATATEDSSQGP) shows a compositional bias: polar residues. A compositionally biased stretch (low complexity) spans 448–460 (DSAGLADDSADAL).

It belongs to the potassium channel family. G (TC 1.A.1.2) subfamily. Kv6.2/KCNG2 sub-subfamily. Heterodimer with KCNB1. As to expression, highly expressed in heart, liver, skeletal muscle, kidney and pancreas. Detected at low levels in brain, lung and placenta.

Its subcellular location is the cell membrane. Its function is as follows. Regulatory alpha-subunit of the voltage-gated potassium (Kv) channel which, when coassembled with KCNB1, can modulate the kinetics and conductance-voltage relationship. Modulates channel activity by shifting the threshold and the half-maximal activation to more negative values. Potassium channel subunit that does not form functional channels by itself. The protein is Voltage-gated potassium channel regulatory subunit KCNG2 of Homo sapiens (Human).